Reading from the N-terminus, the 351-residue chain is Dihydroorotate dehydrogenase (quinone) (351 aa).

Residues 61 to 65 (AGLDK) and Thr85 contribute to the FMN site. Lys65 serves as a coordination point for substrate. 110-114 (NRMGF) provides a ligand contact to substrate. Asn139 and Asn172 together coordinate FMN. Asn172 contacts substrate. Ser175 serves as the catalytic Nucleophile. Asn177 serves as a coordination point for substrate. Lys217 and Thr245 together coordinate FMN. Residue 246–247 (NT) coordinates substrate. Residues Gly268, Gly297, and 318–319 (YS) contribute to the FMN site.

The protein belongs to the dihydroorotate dehydrogenase family. Type 2 subfamily. Monomer. It depends on FMN as a cofactor.

Its subcellular location is the cell membrane. The catalysed reaction is (S)-dihydroorotate + a quinone = orotate + a quinol. It functions in the pathway pyrimidine metabolism; UMP biosynthesis via de novo pathway; orotate from (S)-dihydroorotate (quinone route): step 1/1. Catalyzes the conversion of dihydroorotate to orotate with quinone as electron acceptor. The polypeptide is Dihydroorotate dehydrogenase (quinone) (Xanthomonas campestris pv. campestris (strain 8004)).